The following is a 590-amino-acid chain: Leukocyte immunoglobulin-like receptor subfamily B member 5 (590 aa).

A signal peptide spans 1 to 23 (MTLTLSVLICLGLSVGPRTCVQA). Topologically, residues 24–458 (GTLPKPTLWA…PQSGLGRHLG (435 aa)) are extracellular. 4 consecutive Ig-like C2-type domains span residues 27–116 (PKPT…LELV), 111–228 (DPLE…SLLI), 224–313 (PSLL…DPLD), and 337–418 (GENV…LVVS). A disulfide bridge links Cys49 with Cys98. N-linked (GlcNAc...) asparagine glycosylation occurs at Asn139. Cystine bridges form between Cys144–Cys195 and Cys244–Cys295. 2 N-linked (GlcNAc...) asparagine glycosylation sites follow: Asn279 and Asn339. Cys344 and Cys395 are oxidised to a cystine. Residues 416–433 (VVSGPSGDPSLSPTGSTP) are compositionally biased toward low complexity. The interval 416–449 (VVSGPSGDPSLSPTGSTPTPGPEDQPLTPTGLDP) is disordered. Residues 459–479 (VVTGVSVAFVLLLFLLLFLLL) form a helical membrane-spanning segment. The Cytoplasmic segment spans residues 480-590 (RHRHQSKHRT…PSIYAPLAIH (111 aa)). Disordered regions lie at residues 488 to 514 (RTSA…KRAS) and 529 to 550 (KDTQ…EAPQ). Ser514 carries the phosphoserine modification. Positions 552–557 (VTYAQL) match the ITIM motif 1 motif. Over residues 562–578 (LRREATEPPPSQEREPP) the composition is skewed to basic and acidic residues. The disordered stretch occupies residues 562-590 (LRREATEPPPSQEREPPAEPSIYAPLAIH). The ITIM motif 2 motif lies at 582-587 (SIYAPL).

As to expression, detected in a natural killer (NK) cells.

It is found in the membrane. May act as receptor for class I MHC antigens. The sequence is that of Leukocyte immunoglobulin-like receptor subfamily B member 5 (LILRB5) from Homo sapiens (Human).